We begin with the raw amino-acid sequence, 603 residues long: Peroxisomal targeting signal receptor (603 aa).

A Glycyl cysteine thioester (Cys-Gly) (interchain with G-Cter in ubiquitin) cross-link involves residue C10. An amphipathic helix 1 (AH1) region spans residues 11 to 33 (SANSNAIAQFNKHTQQDRSLQRQ). K22 is covalently cross-linked (Glycyl lysine isopeptide (Lys-Gly) (interchain with G-Cter in ubiquitin)). Residues 23–49 (HTQQDRSLQRQAANQQGIVQNGQGFKK) form a disordered region. The span at 31 to 45 (QRQAANQQGIVQNGQ) shows a compositional bias: polar residues. Residues 58–76 (RQNMDQFMNNGPSQSNFQF) are amphipathic helix 2 (AH2). 3 short sequence motifs (wxxxF/Y motif) span residues 99–103 (WTNEF), 128–132 (WATEF), and 192–196 (WDNQF). Positions 232-248 (FQEVWDSLNSEEVENDF) are amphipathic helix 4 (AH4). The WxxxF/Y motif 4 motif lies at 271-275 (WEKDF). TPR repeat units lie at residues 304 to 338 (ESDPYEIGLQLMENGAKLSEAALAFEAAIQRNEGH), 339 to 372 (INAWLKLGEVQTQNEKEIAGISALEKCLELHPEN), 449 to 482 (PDVQMGLGVLFYANEDFDKTIDCFKAALSIKPDD), 484 to 516 (VLWNRLGASLANSNRSEEAVDAYFKALELKPTF), and 518 to 550 (RARYNLGVSCINIGCYKEAAEHLLSGLSMHQVE).

The protein belongs to the peroxisomal targeting signal receptor family. In terms of assembly, interacts (via WxxxF/Y and LVxEF motifs) with PEX14; promoting translocation through the PEX13-PEX14 docking complex. In terms of processing, monoubiquitinated at Cys-10 by PEX2 during PEX5 passage through the retrotranslocation channel: monoubiquitination acts as a signal for PEX5 extraction and is required for proper export from peroxisomes and recycling. When PEX5 recycling is compromised, polyubiquitinated at Lys-22 by PEX10 during its passage through the retrotranslocation channel, leading to its degradation.

The protein localises to the cytoplasm. The protein resides in the cytosol. It localises to the peroxisome matrix. Its function is as follows. Receptor that mediates peroxisomal import of proteins containing a C-terminal PTS1-type tripeptide peroxisomal targeting signal (SKL-type). Binds to cargo proteins containing a PTS1 peroxisomal targeting signal in the cytosol, and translocates them into the peroxisome matrix by passing through the PEX13-PEX14 docking complex along with cargo proteins. PEX5 receptor is then retrotranslocated into the cytosol, leading to release of bound cargo in the peroxisome matrix, and reset for a subsequent peroxisome import cycle. In Debaryomyces hansenii (strain ATCC 36239 / CBS 767 / BCRC 21394 / JCM 1990 / NBRC 0083 / IGC 2968) (Yeast), this protein is Peroxisomal targeting signal receptor (PEX5).